The sequence spans 613 residues: pH-response transcription factor pacC/RIM101 (613 aa).

The segment at 1–61 (MSPSAPEQKP…SSTAPSTSSD (61 aa)) is disordered. The segment covering 11 to 60 (QLQQQQQQQQQGSSSGDSSSGSVNDSKSVTPAPSATSSTSQSSTAPSTSS) has biased composition (low complexity). C2H2-type zinc fingers lie at residues 64–89 (LICR…CERH), 100–124 (LTCQ…IRVH), and 130–152 (HKCE…VKTH). The segment covering 146 to 157 (KKHVKTHADDSV) has biased composition (basic and acidic residues). 4 disordered regions span residues 146 to 186 (KKHV…YDHT), 371 to 391 (NTPS…GADG), 406 to 535 (AISS…ATRE), and 565 to 613 (EFVE…MPGA). The span at 417-441 (PPSSSMSYTSGHSPSPSSSAMSPQS) shows a compositional bias: low complexity. Polar residues-rich tracts occupy residues 442–460 (RHGS…SLPA) and 506–517 (SGASTPKASESA). The YPX[LI] motif 1 motif lies at 451-454 (YPTL). Positions 605 to 608 (YPIL) match the YPX[LI] motif 2 motif.

This sequence belongs to the pacC/RIM101 family. As to quaternary structure, binds to DNA. Activated by C-terminal proteolytic cleavage by signaling protease (probably palB/RIM13) at neutral to alkaline ambient pH.

The protein localises to the cytoplasm. The protein resides in the nucleus. Its function is as follows. Transcription factor that mediates regulation of both acid- and alkaline-expressed genes in response to ambient pH. At alkaline ambient pH, activates transcription of alkaline-expressed genes (including PAC1 itself) and represses transcription of acid-expressed genes. The protein is pH-response transcription factor pacC/RIM101 (PAC1) of Gibberella moniliformis (Maize ear and stalk rot fungus).